A 175-amino-acid polypeptide reads, in one-letter code: PE-PGRS family protein PE_PGRS8 (175 aa).

Positions 1 to 93 constitute a PE domain; the sequence is MSFVIAAPEA…AGSYAAAEAA (93 aa).

This sequence belongs to the mycobacterial PE family. PGRS subfamily.

Its subcellular location is the secreted. It localises to the cell wall. The protein localises to the cell surface. This is PE-PGRS family protein PE_PGRS8 from Mycobacterium tuberculosis (strain ATCC 25618 / H37Rv).